The primary structure comprises 357 residues: Holliday junction branch migration complex subunit RuvB (357 aa).

Residues 1–15 (MAIQSDSLSSLPDSP) are compositionally biased toward low complexity. Positions 1-30 (MAIQSDSLSSLPDSPRIVAPQPVSPNEESI) are disordered. Residues 13–195 (DSPRIVAPQP…FGIVSRLEFY (183 aa)) form a large ATPase domain (RuvB-L) region. Residues Leu-34, Arg-35, Gly-76, Lys-79, Thr-80, Thr-81, 142–144 (EDF), Arg-185, Tyr-195, and Arg-232 each bind ATP. Position 80 (Thr-80) interacts with Mg(2+). Residues 196 to 266 (NTDELARIVT…AAGRALAMLD (71 aa)) form a small ATPAse domain (RuvB-S) region. A head domain (RuvB-H) region spans residues 269-357 (PQGLDVMDRK…SGGTGELFSK (89 aa)). 3 residues coordinate DNA: Arg-305, Arg-324, and Arg-329.

This sequence belongs to the RuvB family. Homohexamer. Forms an RuvA(8)-RuvB(12)-Holliday junction (HJ) complex. HJ DNA is sandwiched between 2 RuvA tetramers; dsDNA enters through RuvA and exits via RuvB. An RuvB hexamer assembles on each DNA strand where it exits the tetramer. Each RuvB hexamer is contacted by two RuvA subunits (via domain III) on 2 adjacent RuvB subunits; this complex drives branch migration. In the full resolvosome a probable DNA-RuvA(4)-RuvB(12)-RuvC(2) complex forms which resolves the HJ.

It is found in the cytoplasm. The catalysed reaction is ATP + H2O = ADP + phosphate + H(+). The RuvA-RuvB-RuvC complex processes Holliday junction (HJ) DNA during genetic recombination and DNA repair, while the RuvA-RuvB complex plays an important role in the rescue of blocked DNA replication forks via replication fork reversal (RFR). RuvA specifically binds to HJ cruciform DNA, conferring on it an open structure. The RuvB hexamer acts as an ATP-dependent pump, pulling dsDNA into and through the RuvAB complex. RuvB forms 2 homohexamers on either side of HJ DNA bound by 1 or 2 RuvA tetramers; 4 subunits per hexamer contact DNA at a time. Coordinated motions by a converter formed by DNA-disengaged RuvB subunits stimulates ATP hydrolysis and nucleotide exchange. Immobilization of the converter enables RuvB to convert the ATP-contained energy into a lever motion, pulling 2 nucleotides of DNA out of the RuvA tetramer per ATP hydrolyzed, thus driving DNA branch migration. The RuvB motors rotate together with the DNA substrate, which together with the progressing nucleotide cycle form the mechanistic basis for DNA recombination by continuous HJ branch migration. Branch migration allows RuvC to scan DNA until it finds its consensus sequence, where it cleaves and resolves cruciform DNA. This chain is Holliday junction branch migration complex subunit RuvB, found in Bordetella parapertussis (strain 12822 / ATCC BAA-587 / NCTC 13253).